We begin with the raw amino-acid sequence, 518 residues long: 3-octaprenyl-4-hydroxybenzoate carboxy-lyase (518 aa).

Asn177 contacts Mn(2+). Prenylated FMN-binding positions include 180–182 (IYR), 194–196 (RWL), and 199–200 (RG). Glu243 serves as a coordination point for Mn(2+). Asp318 serves as the catalytic Proton donor.

Belongs to the UbiD family. As to quaternary structure, homohexamer. The cofactor is prenylated FMN. Mn(2+) serves as cofactor.

Its subcellular location is the cell membrane. It catalyses the reaction a 4-hydroxy-3-(all-trans-polyprenyl)benzoate + H(+) = a 2-(all-trans-polyprenyl)phenol + CO2. It functions in the pathway cofactor biosynthesis; ubiquinone biosynthesis. In terms of biological role, catalyzes the decarboxylation of 3-octaprenyl-4-hydroxy benzoate to 2-octaprenylphenol, an intermediate step in ubiquinone biosynthesis. The polypeptide is 3-octaprenyl-4-hydroxybenzoate carboxy-lyase (Burkholderia multivorans (strain ATCC 17616 / 249)).